Consider the following 273-residue polypeptide: Shikimate dehydrogenase (NADP(+)) (273 aa).

Shikimate is bound by residues 18–20 (SKS) and threonine 65. The active-site Proton acceptor is lysine 69. Position 81 (glutamate 81) interacts with NADP(+). Residues asparagine 90 and aspartate 105 each coordinate shikimate. NADP(+) contacts are provided by residues 130–134 (GAGGA), 154–159 (NRTHSK), and methionine 217. Tyrosine 219 contacts shikimate. Glycine 240 lines the NADP(+) pocket.

Belongs to the shikimate dehydrogenase family. As to quaternary structure, homodimer.

The enzyme catalyses shikimate + NADP(+) = 3-dehydroshikimate + NADPH + H(+). It functions in the pathway metabolic intermediate biosynthesis; chorismate biosynthesis; chorismate from D-erythrose 4-phosphate and phosphoenolpyruvate: step 4/7. Its function is as follows. Involved in the biosynthesis of the chorismate, which leads to the biosynthesis of aromatic amino acids. Catalyzes the reversible NADPH linked reduction of 3-dehydroshikimate (DHSA) to yield shikimate (SA). In Herminiimonas arsenicoxydans, this protein is Shikimate dehydrogenase (NADP(+)).